Here is a 244-residue protein sequence, read N- to C-terminus: Protein IN2-1 homolog B (244 aa).

The disordered stretch occupies residues 1-27; the sequence is MAAAAAAPASSEKEVLPPSLTSSSEPP. The 82-residue stretch at 32-113 folds into the GST N-terminal domain; sequence GTTRLYVAYH…YIDTNFEGPA (82 aa). Residues valine 85 and 97–98 each bind glutathione; that span reads ES. The GST C-terminal domain maps to 118 to 241; sequence DSEKQQFAEE…FLLEHTKKRL (124 aa).

The sequence is that of Protein IN2-1 homolog B (GSTZ5) from Oryza sativa subsp. indica (Rice).